Consider the following 620-residue polypeptide: Aspartic protease 1 (620 aa).

Over Met-1–Ser-110 the chain is Cytoplasmic. A propeptide spanning residues Met-1–Gly-258 is cleaved from the precursor. An important for proper cellular trafficking region spans residues Tyr-27–Leu-31. The chain crosses the membrane as a helical; Signal-anchor for type II membrane protein span at residues Val-111 to Phe-131. At Ser-132–Asn-620 the chain is on the lumenal side. The disordered stretch occupies residues Thr-138–Arg-174. Residues Pro-156–Arg-165 are compositionally biased toward polar residues. Residues Tyr-275–Ala-616 enclose the Peptidase A1 domain. Active-site residues include Asp-293 and Asp-476. Cys-513 and Cys-550 are disulfide-bonded.

The protein belongs to the peptidase A1 family. Proteolytically cleaved into the soluble active mature form by, at least, cysteine protease CPL. Undergoes at least four processing steps; the first cleavage removes the propeptide resulting in the production of a soluble 45 kDa protein, which is further processed into a 35 kDa form followed by an additional processing into the final active 30 kDa form.

The protein localises to the membrane. It is found in the vacuole. Its function is as follows. Aspartyl protease which is dispensable for protein degradation in the vacuolar compartment (VAC) or for tachyzoite and bradyzoite viability. The protein is Aspartic protease 1 of Toxoplasma gondii.